Here is a 251-residue protein sequence, read N- to C-terminus: CDP-diacylglycerol pyrophosphatase (251 aa).

Residues Ala-4 to Trp-24 form a helical membrane-spanning segment.

Belongs to the Cdh family.

Its subcellular location is the cell inner membrane. The enzyme catalyses a CDP-1,2-diacyl-sn-glycerol + H2O = a 1,2-diacyl-sn-glycero-3-phosphate + CMP + 2 H(+). It functions in the pathway phospholipid metabolism; CDP-diacylglycerol degradation; phosphatidate from CDP-diacylglycerol: step 1/1. This is CDP-diacylglycerol pyrophosphatase from Escherichia coli O81 (strain ED1a).